The chain runs to 657 residues: WD repeat-containing protein 70 (657 aa).

Disordered regions lie at residues 1 to 21 and 43 to 172; these read MEHS…DPQL and FEQT…PVQR. The segment covering 45-78 has biased composition (basic and acidic residues); that stretch reads QTRRTAVERSRKTLEAREKEEEMNREKELRKQIE. The span at 82–105 shows a compositional bias: low complexity; sequence PAPSSSSAARERSQSSCRDTSSSD. Acidic residues-rich tracts occupy residues 106-119 and 150-168; these read SESD…DDEL and EEGE…EEDN. WD repeat units follow at residues 183 to 222, 230 to 271, 284 to 324, 333 to 372, 379 to 418, 424 to 469, and 472 to 511; these read HGTK…ASFK, CECH…ECIK, GHTA…KQKS, GKKV…HPKF, DPGT…KPLF, PTLF…RVYE, and ITDA…QRGA. Lysine 299 is covalently cross-linked (Glycyl lysine isopeptide (Lys-Gly) (interchain with G-Cter in SUMO2)). Position 455 is an N6-acetyllysine (lysine 455). Residues 543-568 are compositionally biased toward basic and acidic residues; it reads REPRQRSTRKQLEKDRLDPLKSHKPE. Residues 543–584 are disordered; the sequence is REPRQRSTRKQLEKDRLDPLKSHKPEPPVAGPGRGGRVGTHG. A compositionally biased stretch (gly residues) spans 574–584; sequence PGRGGRVGTHG. Threonine 582 carries the phosphothreonine modification. Residues lysine 593 and lysine 599 each participate in a glycyl lysine isopeptide (Lys-Gly) (interchain with G-Cter in SUMO2) cross-link. Residues serine 624 and serine 641 each carry the phosphoserine modification. Positions 634 to 657 are disordered; sequence TMFAQVESDDEESKNEPEWKKRKI. The segment covering 647-657 has biased composition (basic and acidic residues); sequence KNEPEWKKRKI.

Belongs to the WD repeat GAD-1 family.

The chain is WD repeat-containing protein 70 (Wdr70) from Mus musculus (Mouse).